We begin with the raw amino-acid sequence, 235 residues long: MIVKRPYKNLGFADHGWLQARHHFSFARYFDPDRINWGAVRVWNDDRIAPDTGFGMHPHKDMEIVTYIREGALTHEDSLGNKGRIEAGDVQVMSAGTGIVHSEYNREASDTRLFQIWIMPNQSGHKPSWGSRSFPKKDHAGRFVVLASGYPEDKEALPIHADAAVLGATLNKGDVINYPLEEQRYGYLVVSKGIIAIENCTLQEGDAAGLAEVETISIEAKEDSEIVMVVTGAKI.

A divalent metal cation-binding residues include H57, H59, H101, and E103.

This sequence belongs to the pirin family. A divalent metal cation is required as a cofactor.

It carries out the reaction quercetin + O2 = 2-(3,4-dihydroxybenzoyloxy)-4,6-dihydroxybenzoate + CO. The protein operates within flavonoid metabolism; quercetin degradation. Its function is as follows. Putative quercetin 2,3-dioxygenase. The sequence is that of Putative quercetin 2,3-dioxygenase ZMO1337 from Zymomonas mobilis subsp. mobilis (strain ATCC 31821 / ZM4 / CP4).